The primary structure comprises 303 residues: Pantothenate synthetase (303 aa).

Met30 to His37 contributes to the ATP binding site. His37 acts as the Proton donor in catalysis. Residue Gln61 participates in (R)-pantoate binding. Gln61 contributes to the beta-alanine binding site. Position 147–150 (Gly147–Asp150) interacts with ATP. Gln153 serves as a coordination point for (R)-pantoate. ATP-binding positions include Val176 and Leu184–Arg187.

This sequence belongs to the pantothenate synthetase family. As to quaternary structure, homodimer.

It localises to the cytoplasm. It catalyses the reaction (R)-pantoate + beta-alanine + ATP = (R)-pantothenate + AMP + diphosphate + H(+). It functions in the pathway cofactor biosynthesis; (R)-pantothenate biosynthesis; (R)-pantothenate from (R)-pantoate and beta-alanine: step 1/1. Functionally, catalyzes the condensation of pantoate with beta-alanine in an ATP-dependent reaction via a pantoyl-adenylate intermediate. The polypeptide is Pantothenate synthetase (Rhizobium johnstonii (strain DSM 114642 / LMG 32736 / 3841) (Rhizobium leguminosarum bv. viciae)).